Consider the following 573-residue polypeptide: MASSSAPVHPARYLSVFLVMLIGIYLLVFFTGDKHTAPKLGIDLQGGTRVTLTARTPDGSAPSREALAQAQQIISARVNGLGVSGSEVVVDGDNLVITVPGNDGSEARNLGQTARLYIRPVLNSMPAQPAAEEPQPAPSAEPQPPGQPAAPPPAQSGAPASPQPGAQPRPYPQDPAPSPNPTSPASPPPAPPAEAPATDPRKDLAERIAQEKKLRQSTNQYMQMVALQFQATRCESDDILAGNDDPKLPLVTCSTDHKTAYLLAPSIISGDQIQNATSGMDQRGIGYVVDLQFKGPAANIWADYTAAHIGTQTAFTLDSQVVSAPQIQEAIPGGRTQISGGDPPFTAATARQLANVLKYGSLPLSFEPSEAQTVSATLGLSSLRAGMIAGAIGLLLVLVYSLLYYRVLGLLTALSLVASGSMVFAILVLLGRYINYTLDLAGIAGLIIGIGTTADSFVVFFERIKDEIREGRSFRSAVPRGWARARKTIVSGNAVTFLAAAVLYFLAIGQVKGFAFTLGLTTILDLVVVFLVTWPLVYLASKSSLLAKPAYNGLGAVQQVARERRAMARTGRG.

A helical membrane pass occupies residues 13–33 (YLSVFLVMLIGIYLLVFFTGD). Residues 127–200 (AQPAAEEPQP…PPAEAPATDP (74 aa)) are disordered. 2 stretches are compositionally biased toward pro residues: residues 135 to 154 (QPAP…PPPA) and 161 to 194 (SPQP…PPAE). Transmembrane regions (helical) follow at residues 385–405 (AGMI…LLYY), 410–430 (LLTA…LVLL), 441–461 (AGIA…VVFF), 489–509 (IVSG…LAIG), and 514–534 (FAFT…LVTW).

It belongs to the SecD/SecF family. SecD subfamily. Forms a complex with SecF. Part of the essential Sec protein translocation apparatus which comprises SecA, SecYEG and auxiliary proteins SecDF. Other proteins may also be involved.

The protein localises to the cell membrane. Part of the Sec protein translocase complex. Interacts with the SecYEG preprotein conducting channel. SecDF uses the proton motive force (PMF) to complete protein translocation after the ATP-dependent function of SecA. The polypeptide is Protein translocase subunit SecD (Mycobacterium tuberculosis (strain CDC 1551 / Oshkosh)).